The following is a 550-amino-acid chain: Probable asparagine synthetase [glutamine-hydrolyzing] (550 aa).

The active-site For GATase activity is Cys-2. The region spanning Cys-2 to Ser-189 is the Glutamine amidotransferase type-2 domain. Residues Arg-53–Met-57, Asn-78–Glu-80, and Asp-100 each bind L-glutamine. The 318-residue stretch at Tyr-213–Tyr-530 folds into the Asparagine synthetase domain. ATP is bound by residues Leu-256, Val-284, and Ser-360 to Gly-361.

The catalysed reaction is L-aspartate + L-glutamine + ATP + H2O = L-asparagine + L-glutamate + AMP + diphosphate + H(+). It participates in amino-acid biosynthesis; L-asparagine biosynthesis; L-asparagine from L-aspartate (L-Gln route): step 1/1. The chain is Probable asparagine synthetase [glutamine-hydrolyzing] from Acanthamoeba polyphaga mimivirus (APMV).